Here is an 85-residue protein sequence, read N- to C-terminus: U4-theraphotoxin-Hhn1a (85 aa).

The N-terminal stretch at 1-22 is a signal peptide; sequence MKMTLIAILTCAAVLVLHTTAA. Residues 23-48 constitute a propeptide that is removed on maturation; the sequence is EELEAESQLMEVGMPDTELEAVDEER. 3 cysteine pairs are disulfide-bonded: C52-C66, C56-C77, and C71-C82.

Belongs to the neurotoxin 12 (Hwtx-2) family. 02 (Hwtx-2) subfamily. Monomer. Expressed by the venom gland.

It localises to the secreted. Its function is as follows. Neurotoxin active on both insects and mammals. The chain is U4-theraphotoxin-Hhn1a from Cyriopagopus hainanus (Chinese bird spider).